A 202-amino-acid polypeptide reads, in one-letter code: dTTP/UTP pyrophosphatase (202 aa).

Aspartate 74 functions as the Proton acceptor in the catalytic mechanism.

The protein belongs to the Maf family. YhdE subfamily. Requires a divalent metal cation as cofactor.

The protein resides in the cytoplasm. The catalysed reaction is dTTP + H2O = dTMP + diphosphate + H(+). The enzyme catalyses UTP + H2O = UMP + diphosphate + H(+). Nucleoside triphosphate pyrophosphatase that hydrolyzes dTTP and UTP. May have a dual role in cell division arrest and in preventing the incorporation of modified nucleotides into cellular nucleic acids. The protein is dTTP/UTP pyrophosphatase of Methylococcus capsulatus (strain ATCC 33009 / NCIMB 11132 / Bath).